A 247-amino-acid chain; its full sequence is ATP synthase subunit a, chloroplastic (247 aa).

5 helical membrane passes run 38–58, 95–115, 134–154, 199–219, and 220–240; these read QVLI…TLAV, VPFI…GALL, INTT…AGLS, LVVV…VMFL, and GLFT…AYIG.

Belongs to the ATPase A chain family. As to quaternary structure, F-type ATPases have 2 components, CF(1) - the catalytic core - and CF(0) - the membrane proton channel. CF(1) has five subunits: alpha(3), beta(3), gamma(1), delta(1), epsilon(1). CF(0) has four main subunits: a, b, b' and c.

The protein localises to the plastid. Its subcellular location is the chloroplast thylakoid membrane. Key component of the proton channel; it plays a direct role in the translocation of protons across the membrane. The sequence is that of ATP synthase subunit a, chloroplastic from Lemna minor (Common duckweed).